The chain runs to 102 residues: Vacuolar ATPase assembly integral membrane protein VMA21 (102 aa).

At Met-1–Thr-30 the chain is on the cytoplasmic side. A helical transmembrane segment spans residues Leu-31–Ala-51. The Lumenal portion of the chain corresponds to Tyr-52–Tyr-66. A helical transmembrane segment spans residues Phe-67–Val-87. The Cytoplasmic segment spans residues Ala-88–Asp-102.

Belongs to the VMA21 family. As to quaternary structure, associates with the V0 complex of the vacuolar ATPase (V-ATPase). Interacts with ATP6AP2.

It localises to the endoplasmic reticulum membrane. Its subcellular location is the endoplasmic reticulum-Golgi intermediate compartment membrane. The protein localises to the cytoplasmic vesicle. The protein resides in the COPII-coated vesicle membrane. Its function is as follows. Required for the assembly of the V0 complex of the vacuolar ATPase (V-ATPase) in the endoplasmic reticulum. The protein is Vacuolar ATPase assembly integral membrane protein VMA21 of Gallus gallus (Chicken).